Reading from the N-terminus, the 82-residue chain is MLNHRYHHYFHRHHHLNHHLYHRHHHHRHHHHRHHHRHQILHQNRHQIHQILLSLNNKIMGYAIFLFLSILLHLVYLVIHRL.

The protein is Histidine-rich protein of Plasmodium falciparum (isolate fcm17 / Senegal).